Consider the following 624-residue polypeptide: Fibronectin type III domain-containing protein 2 (624 aa).

The signal sequence occupies residues 1 to 19; that stretch reads MREQFSVLVISLLFSSSYG. Fibronectin type-III domains follow at residues 131 to 236, 240 to 330, 334 to 430, 431 to 524, and 527 to 624; these read PPQN…TPDI, EPTN…TDVF, MPRF…TVPT, VPRE…PKRD, and VPPN…WPGR.

As to expression, prismatic layer of shell (at protein level).

It localises to the secreted. In Margaritifera margaritifera (Freshwater pearl mussel), this protein is Fibronectin type III domain-containing protein 2.